Here is a 1499-residue protein sequence, read N- to C-terminus: Phospholipid-transporting ATPase VA (1499 aa).

The tract at residues 1–53 is disordered; it reads MEREPAGTEEPGPPGRRRRREGRTRTVRSNLLPPPGAEDPAAGAAKGERRRRR. The Cytoplasmic portion of the chain corresponds to 1-86; it reads MEREPAGTEE…KNLFEQFHRP (86 aa). Residues 15–26 show a composition bias toward basic residues; it reads GRRRRREGRTRT. A helical transmembrane segment spans residues 87 to 106; the sequence is ANVYFVFIALLNFVPAVNAF. The Exoplasmic loop portion of the chain corresponds to 107 to 110; it reads QPGL. Residues 111–128 traverse the membrane as a helical segment; sequence ALAPVLFILAITAFRDLW. The Cytoplasmic segment spans residues 129–309; sequence EDYSRHRSDH…SKLERQMNCD (181 aa). Residues 310-332 traverse the membrane as a helical segment; it reads VLWCVLLLVCMSLFSAVGHGLWI. The Exoplasmic loop portion of the chain corresponds to 333–362; that stretch reads WRYQEKKSLFYVPKSDGSSLSPVTAAVYSF. The chain crosses the membrane as a helical span at residues 363 to 384; sequence LTMIIVLQVLIPISLYVSIEIV. At 385-1087 the chain is on the cytoplasmic side; sequence KACQVYFINQ…GHWCYSRLAN (703 aa). The active-site 4-aspartylphosphate intermediate is the Asp427. ATP contacts are provided by Asp427, Lys428, and Thr429. Asp427 is a Mg(2+) binding site. Residue Thr429 coordinates Mg(2+). Positions 464-531 are disordered; it reads ADSEEEEVVP…AFSSPMEKDI (68 aa). At Ser466 the chain carries Phosphoserine. Polar residues predominate over residues 477 to 499; the sequence is SVSQRGSIGSHQSVRVVHRTQST. Residues Glu700, Phe742, Lys766, Arg809, Thr889, Gly890, Asp891, Arg1005, and Lys1011 each coordinate ATP. Asp1031 is a binding site for Mg(2+). The ATP site is built by Asn1034 and Asp1035. A Mg(2+)-binding site is contributed by Asp1035. Residues 1088–1108 form a helical membrane-spanning segment; the sequence is MVLYFFYKNTMFVGLLFWFQF. The Exoplasmic loop portion of the chain corresponds to 1109 to 1119; that stretch reads FCGFSASTMID. The helical transmembrane segment at 1120-1140 threads the bilayer; it reads QWYLIFFNLLFSSLPPLVTGV. The Cytoplasmic segment spans residues 1141 to 1170; that stretch reads LDRDVPANVLLTNPQLYKSGQNMEEYRPRT. The chain crosses the membrane as a helical span at residues 1171–1192; that stretch reads FWFNMADAAFQSLVCFSIPYLA. Residues 1193 to 1199 are Exoplasmic loop-facing; it reads YYDSNVD. A helical transmembrane segment spans residues 1200–1222; that stretch reads LFTWGTPIVTIALLTFLLHLGIE. The Cytoplasmic portion of the chain corresponds to 1223-1228; the sequence is TKTWTW. A helical transmembrane segment spans residues 1229–1249; the sequence is LNWITCGFSVLLFFTVALIYN. Residues 1250-1267 lie on the Exoplasmic loop side of the membrane; the sequence is ASCATCYPPSNPYWTMQA. A helical membrane pass occupies residues 1268 to 1292; the sequence is LLGDPVFYLTCLMTPVAALLPRLFF. Residues 1293–1499 lie on the Cytoplasmic side of the membrane; that stretch reads RSLQGRVFPT…LIGASSRRSQ (207 aa). Disordered stretches follow at residues 1311–1356 and 1464–1499; these read TRKS…PSWH and DGQA…RRSQ. Over residues 1330 to 1340 the composition is skewed to basic and acidic residues; sequence LPKDSGTEHSS. Polar residues predominate over residues 1341-1356; sequence GRTVKTSVPLSQPSWH.

The protein belongs to the cation transport ATPase (P-type) (TC 3.A.3) family. Type IV subfamily. Component of a P4-ATPase flippase complex which consists of a catalytic alpha subunit ATP10A and an accessory beta subunit TMEM30A. The cofactor is Mg(2+). In terms of processing, autophosphorylated at the conserved aspartate of the P-type ATPase signature sequence. As to expression, widely expressed, with highest levels in kidney, followed by lung, brain, prostate, testis, ovary and small intestine.

It is found in the cell membrane. The protein localises to the endoplasmic reticulum membrane. It carries out the reaction ATP + H2O + phospholipidSide 1 = ADP + phosphate + phospholipidSide 2.. The enzyme catalyses a 1,2-diacyl-sn-glycero-3-phosphocholine(out) + ATP + H2O = a 1,2-diacyl-sn-glycero-3-phosphocholine(in) + ADP + phosphate + H(+). The catalysed reaction is a beta-D-glucosyl-(1&lt;-&gt;1')-N-acylsphing-4-enine(out) + ATP + H2O = a beta-D-glucosyl-(1&lt;-&gt;1')-N-acylsphing-4-enine(in) + ADP + phosphate + H(+). With respect to regulation, inhibited under hypotonic conditions. Its function is as follows. Catalytic component of P4-ATPase flippase complex, which catalyzes the hydrolysis of ATP coupled to the transport of phosphatidylcholine (PC) from the outer to the inner leaflet of the plasma membrane. Initiates inward plasma membrane bending and recruitment of Bin/amphiphysin/Rvs (BAR) domain-containing proteins involved in membrane tubulation and cell trafficking. Facilitates ITGB1/beta1 integrin endocytosis, delaying cell adhesion and cell spreading on extracellular matrix. Has low flippase activity toward glucosylceramide (GlcCer). The chain is Phospholipid-transporting ATPase VA from Homo sapiens (Human).